Here is a 464-residue protein sequence, read N- to C-terminus: ATP synthase subunit beta (464 aa).

151 to 158 (GGAGVGKT) is an ATP binding site.

This sequence belongs to the ATPase alpha/beta chains family. As to quaternary structure, F-type ATPases have 2 components, CF(1) - the catalytic core - and CF(0) - the membrane proton channel. CF(1) has five subunits: alpha(3), beta(3), gamma(1), delta(1), epsilon(1). CF(0) has three main subunits: a(1), b(2) and c(9-12). The alpha and beta chains form an alternating ring which encloses part of the gamma chain. CF(1) is attached to CF(0) by a central stalk formed by the gamma and epsilon chains, while a peripheral stalk is formed by the delta and b chains.

The protein localises to the cell membrane. The enzyme catalyses ATP + H2O + 4 H(+)(in) = ADP + phosphate + 5 H(+)(out). Produces ATP from ADP in the presence of a proton gradient across the membrane. The catalytic sites are hosted primarily by the beta subunits. The sequence is that of ATP synthase subunit beta from Clostridium kluyveri (strain ATCC 8527 / DSM 555 / NBRC 12016 / NCIMB 10680 / K1).